The chain runs to 118 residues: Large ribosomal subunit protein bL19 (118 aa).

It belongs to the bacterial ribosomal protein bL19 family.

This protein is located at the 30S-50S ribosomal subunit interface and may play a role in the structure and function of the aminoacyl-tRNA binding site. This chain is Large ribosomal subunit protein bL19, found in Coprothermobacter proteolyticus (strain ATCC 35245 / DSM 5265 / OCM 4 / BT).